Here is a 4466-residue protein sequence, read N- to C-terminus: Dynein beta chain, ciliary (4466 aa).

Positions 1–1813 are stem; that stretch reads MADVVDPRLE…YANICDAQFK (1813 aa). 154–161 is a binding site for ATP; that stretch reads AGQVKGKT. Coiled-coil stretches lie at residues 733-805, 1036-1056, 1306-1337, and 1443-1468; these read TVLE…WTKQ, TLDQFKEQVDTYEKIYSEADE, WLEINVEQMEMDCKKFAKDIRSLDKEMRAWDA, and LLKSNEELIETLEDNQVQLQNLMTSK. AAA stretches follow at residues 1814–2035, 2095–2316, 2422–2669, and 2767–3016; these read YSYE…VLVV, KVVK…VRFK, ELDP…VFQG, and TYNE…ERRY. ATP is bound by residues 1852–1859, 2133–2140, 2460–2467, and 2805–2812; these read GPAGTGKT, GNAGTGKS, GNAGLGKS, and GVGGSGKQ. Coiled coils occupy residues 3033-3092, 3263-3325, and 3573-3642; these read SLLS…QVVG, EPKR…SRTI, and QERP…EEAK. Residues 3033–3325 are stalk; that stretch reads SLLSMKSKEL…QEAEATSRTI (293 aa). AAA stretches follow at residues 3409 to 3636 and 3846 to 4072; these read LTDD…EISV and VRNF…VLYN.

The protein belongs to the dynein heavy chain family. As to quaternary structure, consists of at least two heavy chains (alpha and beta), three intermediate chains and several light chains.

It is found in the cell projection. The protein localises to the cilium. The protein resides in the flagellum. It localises to the cytoplasm. Its subcellular location is the cytoskeleton. It is found in the flagellum axoneme. Force generating protein of eukaryotic cilia and flagella. Produces force towards the minus ends of microtubules. Dynein has ATPase activity; the force-producing power stroke is thought to occur on release of ADP. In Tripneustes gratilla (Hawaian sea urchin), this protein is Dynein beta chain, ciliary.